The following is a 407-amino-acid chain: (R)-phenyllactyl-CoA dehydratase alpha subunit (407 aa).

Positions 1–4 are excised as a propeptide; the sequence is MSDR.

This sequence belongs to the FldB/FldC dehydratase alpha/beta subunit family. Part of the heterotrimeric phenyllactate dehydratase complex FldABC, composed of (R)-phenyllactate CoA-transferase (FldA) and a heterodimeric (R)-phenyllactyl-CoA dehydratase (FldB and FldC). [4Fe-4S] cluster is required as a cofactor. The cofactor is No flavin could be detected in the FldABC complex, and the addition of FAD, FMN or riboflavin to the dehydratase do not increase enzymatic activity..

It carries out the reaction (R)-3-phenyllactoyl-CoA = (E)-cinnamoyl-CoA + H2O. The enzyme catalyses (R)-3-(4-hydroxyphenyl)lactoyl-CoA = (E)-4-coumaroyl-CoA + H2O. It catalyses the reaction (R)-3-(indol-3-yl)lactoyl-CoA = (E)-3-(indol-3-yl)acryloyl-CoA + H2O. Its pathway is amino-acid degradation; L-phenylalanine degradation. In terms of biological role, component of the phenyllactate dehydratase complex FldABC that is involved in the fermentation of L-phenylalanine via a Stickland reaction. This complex catalyzes the reversible syn-dehydration of (R)-phenyllactate to (E)-cinnamate in two steps, a CoA-transfer from cinnamoyl-CoA to phenyllactate, catalyzed by FldA, followed by the dehydration of phenyllactyl-CoA to cinnamoyl-CoA, catalyzed by FldB and FldC. Requires the activator FldI to initiate catalysis. In Clostridium sporogenes, this protein is (R)-phenyllactyl-CoA dehydratase alpha subunit.